The sequence spans 490 residues: Aspartyl/glutamyl-tRNA(Asn/Gln) amidotransferase subunit B (490 aa).

Belongs to the GatB/GatE family. GatB subfamily. In terms of assembly, heterotrimer of A, B and C subunits.

The catalysed reaction is L-glutamyl-tRNA(Gln) + L-glutamine + ATP + H2O = L-glutaminyl-tRNA(Gln) + L-glutamate + ADP + phosphate + H(+). It catalyses the reaction L-aspartyl-tRNA(Asn) + L-glutamine + ATP + H2O = L-asparaginyl-tRNA(Asn) + L-glutamate + ADP + phosphate + 2 H(+). Functionally, allows the formation of correctly charged Asn-tRNA(Asn) or Gln-tRNA(Gln) through the transamidation of misacylated Asp-tRNA(Asn) or Glu-tRNA(Gln) in organisms which lack either or both of asparaginyl-tRNA or glutaminyl-tRNA synthetases. The reaction takes place in the presence of glutamine and ATP through an activated phospho-Asp-tRNA(Asn) or phospho-Glu-tRNA(Gln). In Methylobacterium radiotolerans (strain ATCC 27329 / DSM 1819 / JCM 2831 / NBRC 15690 / NCIMB 10815 / 0-1), this protein is Aspartyl/glutamyl-tRNA(Asn/Gln) amidotransferase subunit B.